A 186-amino-acid polypeptide reads, in one-letter code: Elongation factor P (186 aa).

Belongs to the elongation factor P family.

The protein resides in the cytoplasm. The protein operates within protein biosynthesis; polypeptide chain elongation. Involved in peptide bond synthesis. Stimulates efficient translation and peptide-bond synthesis on native or reconstituted 70S ribosomes in vitro. Probably functions indirectly by altering the affinity of the ribosome for aminoacyl-tRNA, thus increasing their reactivity as acceptors for peptidyl transferase. This is Elongation factor P from Streptococcus gordonii (strain Challis / ATCC 35105 / BCRC 15272 / CH1 / DL1 / V288).